The following is a 142-amino-acid chain: Large ribosomal subunit protein uL13 (142 aa).

The protein belongs to the universal ribosomal protein uL13 family. Part of the 50S ribosomal subunit.

In terms of biological role, this protein is one of the early assembly proteins of the 50S ribosomal subunit, although it is not seen to bind rRNA by itself. It is important during the early stages of 50S assembly. This chain is Large ribosomal subunit protein uL13, found in Shigella boydii serotype 18 (strain CDC 3083-94 / BS512).